A 1034-amino-acid polypeptide reads, in one-letter code: Tubulin glycylase 3D (1034 aa).

Polar residues-rich tracts occupy residues methionine 1–asparagine 13 and glutamine 131–phenylalanine 146. Disordered stretches follow at residues methionine 1–aspartate 21, glutamine 131–tyrosine 166, and leucine 189–glutamine 208. Over residues arginine 151–arginine 161 the composition is skewed to basic residues. Low complexity predominate over residues leucine 189–leucine 199. The TTL domain occupies aspartate 571–lysine 930. Residues glutamine 741–isoleucine 744, lysine 754, and aspartate 756 contribute to the ATP site. The segment at histidine 1002–leucine 1034 is disordered.

It is found in the cytoplasm. Probable glycylase which modifies tubulin, generating side chains of glycine on the gamma-carboxyl groups of specific glutamate residues within the C-terminal tail of tubulin. This is Tubulin glycylase 3D (TTLL3D) from Tetrahymena thermophila (strain SB210).